The chain runs to 1011 residues: Histone deacetylase 9 (1011 aa).

Ser-22 carries the post-translational modification Phosphoserine. Positions 23 to 27 (PLDLR) are interaction with CTBP1. Disordered regions lie at residues 110–139 (RQEQ…RAVA), 183–249 (TSLD…KDGN), and 262–304 (TESS…EQMV). The segment at 136 to 154 (RAVASTEVKQKLQEFLLSK) is interaction with MEF2. An interaction with MAPK10 region spans residues 175–343 (LWYTAAHHTS…LPAVPSQLNA (169 aa)). Over residues 185 to 199 (LDQSSPPLSGTSPSY) the composition is skewed to polar residues. The segment covering 208 to 219 (DAKDDFPLRKTA) has biased composition (basic and acidic residues). The segment at 218–261 (TASEPNLKVRSRLKQKVAERRSSPLLRRKDGNVVTSFKKRMFEV) is interaction with ETV6. A phosphoserine mark is found at Ser-220 and Ser-240. Residues 233 to 248 (KVAERRSSPLLRRKDG) show a composition bias toward basic and acidic residues. Over residues 262–285 (TESSVSSSSPGSGPSSPNNGPTGS) the composition is skewed to low complexity. A Phosphoserine modification is found at Ser-451. The segment at 494-536 (QLKQPGSHLEEAEEELQGDQAMQEDRAPSSGNSTRSDSSACVD) is disordered. The segment covering 522 to 532 (SSGNSTRSDSS) has biased composition (polar residues). Ser-554 carries the phosphoserine modification. A histone deacetylase region spans residues 631 to 978 (SATGIAYDPL…VNALLGNELE (348 aa)). Positions 646, 648, 654, and 731 each coordinate Zn(2+). Residue His-783 is part of the active site.

It belongs to the histone deacetylase family. HD type 2 subfamily. In terms of assembly, homodimer. Interacts with CTBP1. The phosphorylated form interacts with 14-3-3. Interacts with HDAC1 and HDAC3, and probably with HDAC4 and HDAC5. Interacts with MEF2, MAPK10, ETV6, NCOR1 and BCL6. Interacts with FOXP3 in the absence of T-cell stimulation. In terms of processing, phosphorylated on Ser-220 and Ser-450; which promotes 14-3-3-binding, impairs interaction with MEF2, and antagonizes antimyogenic activity. Phosphorylated on Ser-240; which impairs nuclear accumulation. Isoform 7 is phosphorylated on Tyr-1010. Phosphorylated by the PKC kinases PKN1 and PKN2, impairing nuclear import. Sumoylated. In terms of tissue distribution, broadly expressed, with highest levels in brain, heart, muscle and testis. Isoform 3 is present in human bladder carcinoma cells (at protein level).

The protein resides in the nucleus. The catalysed reaction is N(6)-acetyl-L-lysyl-[histone] + H2O = L-lysyl-[histone] + acetate. Its activity is regulated as follows. Inhibited by Trichostatin A (TSA) and suberoylanilide hydroxamic acid. In terms of biological role, responsible for the deacetylation of lysine residues on the N-terminal part of the core histones (H2A, H2B, H3 and H4). Histone deacetylation gives a tag for epigenetic repression and plays an important role in transcriptional regulation, cell cycle progression and developmental events. Represses MEF2-dependent transcription. Its function is as follows. Isoform 3 lacks active site residues and therefore is catalytically inactive. Represses MEF2-dependent transcription by recruiting HDAC1 and/or HDAC3. Seems to inhibit skeletal myogenesis and to be involved in heart development. Protects neurons from apoptosis, both by inhibiting JUN phosphorylation by MAPK10 and by repressing JUN transcription via HDAC1 recruitment to JUN promoter. This is Histone deacetylase 9 (HDAC9) from Homo sapiens (Human).